Reading from the N-terminus, the 80-residue chain is MSQRGISKGLLVCHSVRLAKVWVDQIEISIPLGVEPEPKQIEGISDLIDSLHSYDCSVCSVVAHKLDDAMCRWCELLLDA.

This is an uncharacterized protein from Pseudoalteromonas phage PM2 (Bacteriophage PM2).